Here is a 184-residue protein sequence, read N- to C-terminus: Translocon-associated protein subunit beta (184 aa).

Residues 1–20 (MNFKTVISLFLVLFVSFVYC) form the signal peptide. The Lumenal portion of the chain corresponds to 21–147 (ENGAELLFHK…SQADYEKRTS (127 aa)). The N-linked (GlcNAc...) asparagine glycan is linked to N94. Residues 148–168 (LLIKEWITFFVLCAGAIALPY) form a helical membrane-spanning segment. Topologically, residues 169–184 (SISTYYKKNYENGIKK) are cytoplasmic.

The protein belongs to the TRAP-beta family. Heterotrimer of TRAP-alpha, TRAP-beta and TRAP-gamma.

It is found in the endoplasmic reticulum membrane. Functionally, TRAP proteins are part of a complex whose function is to bind calcium to the ER membrane and thereby regulate the retention of ER resident proteins. This chain is Translocon-associated protein subunit beta (ssr2), found in Dictyostelium discoideum (Social amoeba).